Reading from the N-terminus, the 862-residue chain is Probable glutaminase ARB_05535/05536 (862 aa).

Positions 1-19 (MLSWVLLAWAVACSALAGA) are cleaved as a signal peptide. Asn-106, Asn-273, Asn-436, Asn-448, Asn-486, Asn-610, and Asn-744 each carry an N-linked (GlcNAc...) asparagine glycan. The segment at 798 to 862 (FLDDKDNNSP…SQMTIVNEND (65 aa)) is disordered. Polar residues predominate over residues 853-862 (SQMTIVNEND).

Belongs to the fungal glutaminase gtaA family.

The protein resides in the secreted. It catalyses the reaction L-glutamine + H2O = L-glutamate + NH4(+). In terms of biological role, glutaminase catalyzes the hydrolysis of glutamine to glutamic acid and plays a key role in nitrogen metabolism. The protein is Probable glutaminase ARB_05535/05536 of Arthroderma benhamiae (strain ATCC MYA-4681 / CBS 112371) (Trichophyton mentagrophytes).